The following is a 166-amino-acid chain: Large ribosomal subunit protein bL9 (166 aa).

The protein belongs to the bacterial ribosomal protein bL9 family.

Functionally, binds to the 23S rRNA. The chain is Large ribosomal subunit protein bL9 from Psychrobacter arcticus (strain DSM 17307 / VKM B-2377 / 273-4).